The chain runs to 458 residues: Bifunctional protein GlmU (458 aa).

The tract at residues 1–232 (MTSSLSVIIL…TFEIEGVNNR (232 aa)) is pyrophosphorylase. UDP-N-acetyl-alpha-D-glucosamine-binding positions include 10–13 (LAAG), lysine 24, glutamine 79, 84–85 (GT), 106–108 (YGD), glycine 142, glutamate 157, asparagine 172, and asparagine 230. Aspartate 108 is a Mg(2+) binding site. Asparagine 230 is a binding site for Mg(2+). Residues 233 to 253 (QQLASLERTWQGKLVADLQEA) are linker. Positions 254–458 (GVQFADPTRV…KNDFKRPTKK (205 aa)) are N-acetyltransferase. Residues arginine 336 and lysine 354 each contribute to the UDP-N-acetyl-alpha-D-glucosamine site. Histidine 366 (proton acceptor) is an active-site residue. UDP-N-acetyl-alpha-D-glucosamine contacts are provided by tyrosine 369 and asparagine 380. Acetyl-CoA contacts are provided by residues alanine 383, 389–390 (NY), serine 408, alanine 426, and arginine 443.

This sequence in the N-terminal section; belongs to the N-acetylglucosamine-1-phosphate uridyltransferase family. The protein in the C-terminal section; belongs to the transferase hexapeptide repeat family. As to quaternary structure, homotrimer. Mg(2+) serves as cofactor.

The protein resides in the cytoplasm. It carries out the reaction alpha-D-glucosamine 1-phosphate + acetyl-CoA = N-acetyl-alpha-D-glucosamine 1-phosphate + CoA + H(+). The enzyme catalyses N-acetyl-alpha-D-glucosamine 1-phosphate + UTP + H(+) = UDP-N-acetyl-alpha-D-glucosamine + diphosphate. The protein operates within nucleotide-sugar biosynthesis; UDP-N-acetyl-alpha-D-glucosamine biosynthesis; N-acetyl-alpha-D-glucosamine 1-phosphate from alpha-D-glucosamine 6-phosphate (route II): step 2/2. Its pathway is nucleotide-sugar biosynthesis; UDP-N-acetyl-alpha-D-glucosamine biosynthesis; UDP-N-acetyl-alpha-D-glucosamine from N-acetyl-alpha-D-glucosamine 1-phosphate: step 1/1. It participates in bacterial outer membrane biogenesis; LPS lipid A biosynthesis. Catalyzes the last two sequential reactions in the de novo biosynthetic pathway for UDP-N-acetylglucosamine (UDP-GlcNAc). The C-terminal domain catalyzes the transfer of acetyl group from acetyl coenzyme A to glucosamine-1-phosphate (GlcN-1-P) to produce N-acetylglucosamine-1-phosphate (GlcNAc-1-P), which is converted into UDP-GlcNAc by the transfer of uridine 5-monophosphate (from uridine 5-triphosphate), a reaction catalyzed by the N-terminal domain. This Psychrobacter cryohalolentis (strain ATCC BAA-1226 / DSM 17306 / VKM B-2378 / K5) protein is Bifunctional protein GlmU.